The sequence spans 1071 residues: Exportin-1 (1071 aa).

Positions Met1 to Leu679 are necessary for HTLV-1 Rex-mediated mRNA export. An Importin N-terminal domain is found at Ala46–Lys112. HEAT repeat units lie at residues Gln217 to Tyr240, Ile241 to Ser277, Met354 to Thr472, Arg515 to Arg553, Lys560 to Arg597, and Val602 to Tyr639. Positions Cys327–Ser450 are interaction with Ran and nuclear export complex formation. The residue at position 391 (Ser391) is a Phosphoserine. The interval Pro411–Phe414 is necessary for HTLV-1 Rex multimerization. Residues Pro411–His481 are interaction with RANBP3. Position 446 is an N6-acetyllysine (Lys446). Phosphothreonine is present on Thr448. Phosphoserine is present on Ser450. Tyr454 bears the Phosphotyrosine mark. The residue at position 693 (Lys693) is an N6-acetyllysine. HEAT repeat units lie at residues Asn775 to Gly813, Thr885 to Gln916, Thr917 to Glu954, and Phe1002 to Glu1039. Residues Val800 to Pro820 are interaction with HIV-1 Rev. Ser1031 carries the phosphoserine modification.

This sequence belongs to the exportin family. As to quaternary structure, found in a U snRNA export complex with PHAX/RNUXA, NCBP1/CBP80, NCBP2/CBP20, RAN, XPO1 and m7G-capped RNA. Component of a nuclear export receptor complex composed of KPNB1, RAN, SNUPN and XPO1. Found in a trimeric export complex with SNUPN, RAN and XPO1. Found in a nuclear export complex with RANBP3 and RAN. Found in a 60S ribosomal subunit export complex with NMD3, RAN, XPO1. Interacts with DDX3X, NMD3, NUP42, NUP88, NUP214, RANBP3 and TERT. Interacts with NEMF (via its N-terminus). Interacts with the monomeric form of BIRC5/survivin deacetylated at 'Lys-129'. Interacts with DTNBP1 and SERTAD2; the interactions translocate DTNBP1 and SERTAD2 out of the nucleus. Interacts with ATF2. Interacts with SLC35G1 and STIM1. Interacts with DCAF8. Interacts with CPEB3. Interacts with HAX1. Interacts with BOK; translocates to the cytoplasm. Interacts with HSP90AB1. Interacts with LRPPRC; interacts with LRPPRC alone and also when LRPPRC is in complex with EIF4E and with EIF4E sensitivity element (4ESE)-containing mRNAs to form an EIF4E-dependent mRNA export complex. In terms of assembly, (Microbial infection) Interacts with HIV-1 Rev. (Microbial infection) Interacts with HTLV-1 Rex. As to quaternary structure, (Microbial infection) Interacts with influenza A nucleoprotein. In terms of assembly, (Microbial infection) Interacts with Epstein-Barr virus protein BMLF1. (Microbial infection) Part of a tetrameric complex composed of CRM1, importin alpha/beta dimer and the Venezuelan equine encephalitis virus (VEEV) capsid; this complex blocks the receptor-mediated transport through the nuclear pore. As to quaternary structure, (Microbial infection) Interacts with SARS-CoV virus protein ORF9b; this interaction mediates protein ORF9b export out of the nucleus. As to expression, expressed in heart, brain, placenta, lung, liver, skeletal muscle, pancreas, spleen, thymus, prostate, testis, ovary, small intestine, colon and peripheral blood leukocytes. Not expressed in the kidney.

The protein localises to the cytoplasm. Its subcellular location is the nucleus. It is found in the nucleoplasm. The protein resides in the cajal body. It localises to the nucleolus. Its function is as follows. Mediates the nuclear export of cellular proteins (cargos) bearing a leucine-rich nuclear export signal (NES) and of RNAs. In the nucleus, in association with RANBP3, binds cooperatively to the NES on its target protein and to the GTPase RAN in its active GTP-bound form (Ran-GTP). Docking of this complex to the nuclear pore complex (NPC) is mediated through binding to nucleoporins. Upon transit of a nuclear export complex into the cytoplasm, disassembling of the complex and hydrolysis of Ran-GTP to Ran-GDP (induced by RANBP1 and RANGAP1, respectively) cause release of the cargo from the export receptor. The directionality of nuclear export is thought to be conferred by an asymmetric distribution of the GTP- and GDP-bound forms of Ran between the cytoplasm and nucleus. Involved in U3 snoRNA transport from Cajal bodies to nucleoli. Binds to late precursor U3 snoRNA bearing a TMG cap. In terms of biological role, (Microbial infection) Mediates the export of unspliced or incompletely spliced RNAs out of the nucleus from different viruses including HIV-1, HTLV-1 and influenza A. Interacts with, and mediates the nuclear export of HIV-1 Rev and HTLV-1 Rex proteins. Involved in HTLV-1 Rex multimerization. The sequence is that of Exportin-1 (XPO1) from Homo sapiens (Human).